The sequence spans 179 residues: Low molecular weight phosphotyrosine protein phosphatase (179 aa).

The active-site Nucleophile is the cysteine 15. Residue arginine 21 is part of the active site. Aspartate 148 serves as the catalytic Proton donor.

It belongs to the low molecular weight phosphotyrosine protein phosphatase family.

Its subcellular location is the cytoplasm. It catalyses the reaction O-phospho-L-tyrosyl-[protein] + H2O = L-tyrosyl-[protein] + phosphate. The catalysed reaction is a phosphate monoester + H2O = an alcohol + phosphate. Functionally, acts on tyrosine phosphorylated proteins, low-MW aryl phosphates and natural and synthetic acyl phosphates. In Dictyostelium discoideum (Social amoeba), this protein is Low molecular weight phosphotyrosine protein phosphatase (acp1).